Consider the following 673-residue polypeptide: Metal-nicotianamine transporter YSL1 (673 aa).

The span at 1–13 (MEIEQRRIMKREG) shows a compositional bias: basic and acidic residues. The disordered stretch occupies residues 1–39 (MEIEQRRIMKREGEEEEDNNQLSLQEEEPDTEEEMSGRT). Acidic residues predominate over residues 14 to 34 (EEEEDNNQLSLQEEEPDTEEE). A run of 16 helical transmembrane segments spans residues 46-66 (QITV…SVIA), 71-91 (LTTG…FVFV), 119-139 (SAVA…LLGL), 163-183 (GLGW…FVLI), 225-245 (FMKY…FSGI), 260-280 (AWKQ…GMIC), 283-303 (LVNL…WPLL), 328-348 (VFLS…KILF), 392-412 (FAVS…PLIF), 420-440 (VIVA…GAGL), 442-462 (DINM…AVTG), 467-487 (VVAG…SCIL), 510-530 (IGTV…YKAF), 558-578 (FSAL…FAVL), 604-624 (FLVG…VFVW), and 642-662 (GLIC…LAGV).

Belongs to the YSL (TC 2.A.67.2) family. In terms of tissue distribution, low levels of expression in leaves and shoots, but not detected in roots. Restricted to the vasculature, in the xylem parenchyma surrounding xylem tubes. Expressed in pollen grains, in the vasculature of petals and sepals, in the carpel veins, in the style underneath the stigmatic papillae, in the vascular tissue of the funiculus and in the chalazal endosperm.

The protein resides in the membrane. In terms of biological role, involved in iron loading of the seeds. Acts probably as a transporter of iron- and metal-nicotianamine chelates. The sequence is that of Metal-nicotianamine transporter YSL1 (YSL1) from Arabidopsis thaliana (Mouse-ear cress).